A 525-amino-acid polypeptide reads, in one-letter code: MNTFPWLTTIILLPIVAALFIPIIPDKDGKTVRWYSLAVGLVDFALIVYAFYSGFDLSEPGLQLVESYTWLPQIDLKWSVGADGLSMPLIILTGFITTLATMAAWPVTLKPKLFYFLMLLMYGGQIAVFAVQDILLFFLVWELELVPVYLILSIWGGKKRLYAATKFILYTAGGSLFILLAGLTLAFYGDVNTFDMSAIAAKDIPVNLQLLLYAGFLIAYGVKLPIFPLHTWLPDAHGEATAPAHMLLAGILLKMGGYALLRMNVGMLPDAHAVFAPVLVILGVVNIIYAAFTSFAQRNLKRKIAYSSISHMGFVLIGLASFTDLGMSGAMLQMISHGLIGASLFFMVGATYDRTHTLMLDEMGGIGQKMKKGFAMWTACSLASLALPGMSGFVAELMVFVGFATSDAYNLVFRTIVVVLMGVGVILTPIYLLSMLREMLYGPENEELVNHTNLVDVEPREVFIIGCLLVPIIGIGFYPKLITQIYDPTINQLVQTARRSVPSLVQQANLSPLEVTALRPPTIGF.

14 helical membrane-spanning segments follow: residues phenylalanine 4–isoleucine 24, leucine 37–leucine 57, leucine 89–leucine 109, proline 111–valine 131, isoleucine 134–isoleucine 154, phenylalanine 167–phenylalanine 187, leucine 210–histidine 230, threonine 241–leucine 261, alanine 273–threonine 293, isoleucine 309–glycine 329, alanine 330–alanine 350, leucine 385–threonine 405, isoleucine 416–leucine 436, and valine 462–isoleucine 482.

This sequence belongs to the complex I subunit 4 family.

Its subcellular location is the cellular thylakoid membrane. The enzyme catalyses a plastoquinone + NADH + (n+1) H(+)(in) = a plastoquinol + NAD(+) + n H(+)(out). It carries out the reaction a plastoquinone + NADPH + (n+1) H(+)(in) = a plastoquinol + NADP(+) + n H(+)(out). In terms of biological role, NDH-1 shuttles electrons from NAD(P)H, via FMN and iron-sulfur (Fe-S) centers, to quinones in the respiratory chain. The immediate electron acceptor for the enzyme in this species is believed to be plastoquinone. Couples the redox reaction to proton translocation (for every two electrons transferred, four hydrogen ions are translocated across the cytoplasmic membrane), and thus conserves the redox energy in a proton gradient. The polypeptide is NAD(P)H-quinone oxidoreductase chain 4-1 (ndhD1) (Synechocystis sp. (strain ATCC 27184 / PCC 6803 / Kazusa)).